Reading from the N-terminus, the 172-residue chain is Ribosome maturation factor RimM (172 aa).

One can recognise a PRC barrel domain in the interval 97–170 (ENEFYFHEII…KITIEVMEGL (74 aa)).

This sequence belongs to the RimM family. Binds ribosomal protein uS19.

Its subcellular location is the cytoplasm. Functionally, an accessory protein needed during the final step in the assembly of 30S ribosomal subunit, possibly for assembly of the head region. Essential for efficient processing of 16S rRNA. May be needed both before and after RbfA during the maturation of 16S rRNA. It has affinity for free ribosomal 30S subunits but not for 70S ribosomes. This chain is Ribosome maturation factor RimM, found in Listeria innocua serovar 6a (strain ATCC BAA-680 / CLIP 11262).